Here is a 297-residue protein sequence, read N- to C-terminus: UDP-3-O-acyl-N-acetylglucosamine deacetylase (297 aa).

3 residues coordinate Zn(2+): H79, H238, and D242. Residue H265 is the Proton donor of the active site.

It belongs to the LpxC family. Zn(2+) serves as cofactor.

The catalysed reaction is a UDP-3-O-[(3R)-3-hydroxyacyl]-N-acetyl-alpha-D-glucosamine + H2O = a UDP-3-O-[(3R)-3-hydroxyacyl]-alpha-D-glucosamine + acetate. The protein operates within glycolipid biosynthesis; lipid IV(A) biosynthesis; lipid IV(A) from (3R)-3-hydroxytetradecanoyl-[acyl-carrier-protein] and UDP-N-acetyl-alpha-D-glucosamine: step 2/6. Functionally, catalyzes the hydrolysis of UDP-3-O-myristoyl-N-acetylglucosamine to form UDP-3-O-myristoylglucosamine and acetate, the committed step in lipid A biosynthesis. This is UDP-3-O-acyl-N-acetylglucosamine deacetylase from Blochmanniella pennsylvanica (strain BPEN).